The chain runs to 475 residues: DNA-binding protein D-ETS-6 (475 aa).

Residues Ser-42–Pro-150 form a disordered region. Over residues Ser-70–Pro-108 the composition is skewed to low complexity. Residues Val-109 to Val-121 show a composition bias toward pro residues. A compositionally biased stretch (low complexity) spans Ser-122–Val-144. The PNT domain occupies Arg-132 to Ala-219. A DNA-binding region (ETS) is located at residues Ile-255 to Asp-335. The interval Gly-350–Asn-475 is disordered. Basic residues predominate over residues Pro-375–His-388. Residues Ser-401–Ser-436 show a composition bias toward low complexity. Positions Arg-453–Asn-475 are enriched in polar residues.

It belongs to the ETS family. Embryonic ventral nervous system and 1 pair of neurons in each thoracic segment.

The protein localises to the nucleus. The protein is DNA-binding protein D-ETS-6 (Ets21C) of Drosophila melanogaster (Fruit fly).